Consider the following 90-residue polypeptide: DNA-binding protein HU-beta (90 aa).

Belongs to the bacterial histone-like protein family. In terms of assembly, heterodimer of an alpha and a beta chain.

Functionally, histone-like DNA-binding protein which is capable of wrapping DNA to stabilize it, and thus to prevent its denaturation under extreme environmental conditions. In Pseudomonas fluorescens (strain ATCC BAA-477 / NRRL B-23932 / Pf-5), this protein is DNA-binding protein HU-beta (hupB).